Here is a 411-residue protein sequence, read N- to C-terminus: ATP-dependent Clp protease ATP-binding subunit ClpX (411 aa).

The ClpX-type ZB domain occupies 1–49 (MSDKNIRCSFCGRTQKEVKKLIAGPGVYICDECVKLAYDIIEEEDSEEI). Residues Cys-8, Cys-11, Cys-30, and Cys-33 each contribute to the Zn(2+) site. 115-122 (PTGVGKTL) provides a ligand contact to ATP.

This sequence belongs to the ClpX chaperone family. As to quaternary structure, component of the ClpX-ClpP complex. Forms a hexameric ring that, in the presence of ATP, binds to fourteen ClpP subunits assembled into a disk-like structure with a central cavity, resembling the structure of eukaryotic proteasomes.

Its function is as follows. ATP-dependent specificity component of the Clp protease. It directs the protease to specific substrates. Can perform chaperone functions in the absence of ClpP. This chain is ATP-dependent Clp protease ATP-binding subunit ClpX, found in Dictyoglomus turgidum (strain DSM 6724 / Z-1310).